The following is a 165-amino-acid chain: HTH-type transcriptional regulator MmpR5 (165 aa).

Residues 1 to 151 (MSVNDGVDQM…LLAYMENVVS (151 aa)) enclose the HTH marR-type domain. A DNA-binding region (H-T-H motif) is located at residues 53–76 (SEELATALAASSGGISTNARMLIQ).

As to quaternary structure, homodimer.

Its function is as follows. Controls the expression level of the Mmps2-MmpL2, MmpS4-MmpL4, and MmpS5-MmpL5 transport systems. Also controls its own expression. Acts by binding directly to the promoter regions. This is HTH-type transcriptional regulator MmpR5 from Mycobacterium tuberculosis (strain ATCC 25618 / H37Rv).